The sequence spans 293 residues: Protoheme IX farnesyltransferase (293 aa).

Transmembrane regions (helical) follow at residues 9-29 (LIKPGIVLGNIISAISGFLLA), 38-58 (YIILMYMILGTTLVIASSCVL), 86-106 (FVKNSIIYAIILNTLGFLFLG), 111-131 (LLTILLTMIGFLVYIGIYSLW), 137-157 (IYSTIIGSISGSMPPIIGYCT), 167-187 (WLLFIAFSFWQIPHSYSITIF), 211-231 (IHMILCILIFTLANISLTVLG), 234-254 (SYTFLYIISIMSIFWLYTGWY), and 271-291 (ILSIVIITSLNVLLSLDSIFI).

Belongs to the UbiA prenyltransferase family. Protoheme IX farnesyltransferase subfamily.

It localises to the cell inner membrane. It carries out the reaction heme b + (2E,6E)-farnesyl diphosphate + H2O = Fe(II)-heme o + diphosphate. It functions in the pathway porphyrin-containing compound metabolism; heme O biosynthesis; heme O from protoheme: step 1/1. Converts heme B (protoheme IX) to heme O by substitution of the vinyl group on carbon 2 of heme B porphyrin ring with a hydroxyethyl farnesyl side group. In Blochmanniella floridana, this protein is Protoheme IX farnesyltransferase.